The following is a 163-amino-acid chain: Regulatory protein RecX (163 aa).

The tract at residues 1 to 21 (MSDAEDIPTGRKRRPREQTPV) is disordered.

Belongs to the RecX family.

Its subcellular location is the cytoplasm. Modulates RecA activity. In Stenotrophomonas maltophilia (strain R551-3), this protein is Regulatory protein RecX.